The primary structure comprises 384 residues: Probable inactive linolenate hydroperoxide lyase (384 aa).

Cys346 is a heme binding site.

It belongs to the cytochrome P450 family. It depends on heme as a cofactor. As to expression, expressed in roots, leaves, flowers and siliques.

This is Probable inactive linolenate hydroperoxide lyase from Arabidopsis thaliana (Mouse-ear cress).